The primary structure comprises 288 residues: Protein PGR (288 aa).

7 consecutive transmembrane segments (helical) span residues 1-21 (METS…LIAF), 29-49 (LDLS…TAGF), 91-111 (VLCN…LTGW), 123-143 (IVTA…GDTW), 177-197 (LLAA…FGLF), 210-230 (LLVI…DSIL), and 268-288 (VNFV…VYIF).

It belongs to the TMEM19 family. In terms of tissue distribution, expressed in the vasculature of leaves, roots, inflorescences, siliques, anther filaments and sepals. Detected primarily in the phloem tissues, including in the root ans shoot apical meristems.

The protein resides in the cell membrane. Its function is as follows. Involved in the glucose-triggered developmental leaf growth process. The protein is Protein PGR of Arabidopsis thaliana (Mouse-ear cress).